Reading from the N-terminus, the 605-residue chain is Pyruvate decarboxylase 1 (605 aa).

Residues Asp-67 and His-154 each coordinate substrate. The segment at 432 to 514 (DSWFNCQKLR…FLINNGGYTI (83 aa)) is thiamine pyrophosphate binding. Mg(2+) contacts are provided by Asp-482, Asn-509, and Gly-511. A substrate-binding site is contributed by Glu-515.

It belongs to the TPP enzyme family. In terms of assembly, homotetramer. It depends on a metal cation as a cofactor. The cofactor is thiamine diphosphate.

The catalysed reaction is a 2-oxocarboxylate + H(+) = an aldehyde + CO2. This Oryza sativa subsp. indica (Rice) protein is Pyruvate decarboxylase 1 (PDC1).